We begin with the raw amino-acid sequence, 340 residues long: Photosystem II protein D1 (340 aa).

Helical transmembrane passes span 25–42, 114–129, and 138–152; these read YIGW…LATV, HFFL…EWEF, and WIFV…AAAA. Residue H114 participates in chlorophyll a binding. W122 is a binding site for pheophytin a. The [CaMn4O5] cluster site is built by D166 and E185. A helical transmembrane segment spans residues 193-214; the sequence is FHILGVAGVFGGSLFSAMHGSL. H194 contacts chlorophyll a. A quinone-binding positions include H211 and 260-261; that span reads SF. H211 lines the Fe cation pocket. H268 serves as a coordination point for Fe cation. The chain crosses the membrane as a helical span at residues 270 to 284; the sequence is FLAAWPVIGIWFTSL. Positions 328, 329, 338, and 340 each coordinate [CaMn4O5] cluster.

This sequence belongs to the reaction center PufL/M/PsbA/D family. As to quaternary structure, PSII is composed of 1 copy each of membrane proteins PsbA, PsbB, PsbC, PsbD, PsbE, PsbF, PsbH, PsbI, PsbJ, PsbK, PsbL, PsbM, PsbT, PsbX, PsbY, PsbZ, Psb30/Ycf12, at least 3 peripheral proteins of the oxygen-evolving complex and a large number of cofactors. It forms dimeric complexes. It depends on The D1/D2 heterodimer binds P680, chlorophylls that are the primary electron donor of PSII, and subsequent electron acceptors. It shares a non-heme iron and each subunit binds pheophytin, quinone, additional chlorophylls, carotenoids and lipids. D1 provides most of the ligands for the Mn4-Ca-O5 cluster of the oxygen-evolving complex (OEC). There is also a Cl(-1) ion associated with D1 and D2, which is required for oxygen evolution. The PSII complex binds additional chlorophylls, carotenoids and specific lipids. as a cofactor. Tyr-157 forms a radical intermediate that is referred to as redox-active TyrZ, YZ or Y-Z.

Its subcellular location is the plastid. The protein resides in the chloroplast thylakoid membrane. The catalysed reaction is 2 a plastoquinone + 4 hnu + 2 H2O = 2 a plastoquinol + O2. Functionally, photosystem II (PSII) is a light-driven water:plastoquinone oxidoreductase that uses light energy to abstract electrons from H(2)O, generating O(2) and a proton gradient subsequently used for ATP formation. It consists of a core antenna complex that captures photons, and an electron transfer chain that converts photonic excitation into a charge separation. The D1/D2 (PsbA/PsbD) reaction center heterodimer binds P680, the primary electron donor of PSII as well as several subsequent electron acceptors. This Amphidinium operculatum (Dinoflagellate) protein is Photosystem II protein D1.